The primary structure comprises 1056 residues: Carbamoyl phosphate synthase large chain (1056 aa).

The segment at 1–397 is carboxyphosphate synthetic domain; that stretch reads MPKKSHIKKV…AFKKALRSLD (397 aa). The ATP site is built by Arg-127, Arg-167, Gly-173, Gly-174, Glu-206, Val-208, Glu-213, Gly-239, Ile-240, His-241, Gln-282, and Glu-294. The ATP-grasp 1 domain occupies 131 to 323; that stretch reads RDLMNAIGEP…IARVAAKIAI (193 aa). 3 residues coordinate Mg(2+): Gln-282, Glu-294, and Asn-296. Residues Gln-282, Glu-294, and Asn-296 each coordinate Mn(2+). Residues 398–530 form an oligomerization domain region; sequence NDMQQHTNPS…YSTWEEGCEL (133 aa). The interval 531–920 is carbamoyl phosphate synthetic domain; sequence VRDSAKKVLI…YKACTAADNT (390 aa). The 192-residue stretch at 662-853 folds into the ATP-grasp 2 domain; it reads SRLLTRLEIP…LAKIAAKVMV (192 aa). ATP is bound by residues Arg-698, Ser-737, Leu-739, Glu-744, Gly-769, Val-770, His-771, Ser-772, Gln-812, and Glu-824. Gln-812, Glu-824, and Asn-826 together coordinate Mg(2+). Mn(2+) is bound by residues Gln-812, Glu-824, and Asn-826. Residues 919 to 1056 form the MGS-like domain; that stretch reads NTLPTTGNVF…EPLGHYHGLM (138 aa). The interval 921–1056 is allosteric domain; the sequence is LPTTGNVFIS…EPLGHYHGLM (136 aa).

This sequence belongs to the CarB family. In terms of assembly, composed of two chains; the small (or glutamine) chain promotes the hydrolysis of glutamine to ammonia, which is used by the large (or ammonia) chain to synthesize carbamoyl phosphate. Tetramer of heterodimers (alpha,beta)4. It depends on Mg(2+) as a cofactor. The cofactor is Mn(2+).

The catalysed reaction is hydrogencarbonate + L-glutamine + 2 ATP + H2O = carbamoyl phosphate + L-glutamate + 2 ADP + phosphate + 2 H(+). It catalyses the reaction hydrogencarbonate + NH4(+) + 2 ATP = carbamoyl phosphate + 2 ADP + phosphate + 2 H(+). It functions in the pathway amino-acid biosynthesis; L-arginine biosynthesis; carbamoyl phosphate from bicarbonate: step 1/1. It participates in pyrimidine metabolism; UMP biosynthesis via de novo pathway; (S)-dihydroorotate from bicarbonate: step 1/3. Large subunit of the glutamine-dependent carbamoyl phosphate synthetase (CPSase). CPSase catalyzes the formation of carbamoyl phosphate from the ammonia moiety of glutamine, carbonate, and phosphate donated by ATP, constituting the first step of 2 biosynthetic pathways, one leading to arginine and/or urea and the other to pyrimidine nucleotides. The large subunit (synthetase) binds the substrates ammonia (free or transferred from glutamine from the small subunit), hydrogencarbonate and ATP and carries out an ATP-coupled ligase reaction, activating hydrogencarbonate by forming carboxy phosphate which reacts with ammonia to form carbamoyl phosphate. In Methanoculleus marisnigri (strain ATCC 35101 / DSM 1498 / JR1), this protein is Carbamoyl phosphate synthase large chain.